The following is a 479-amino-acid chain: Probable periplasmic serine endoprotease DegP-like (479 aa).

The signal sequence occupies residues 1 to 27; sequence MSIPRLKSYLSMFAAVLMLGQVLSAQA. Active-site charge relay system residues include His-117, Asp-147, and Ser-220. Substrate contacts are provided by residues 218–220 and 275–279; these read GNS and LGVVI. PDZ domains are found at residues 264–355 and 361–468; these read LKKD…IRNG and DVTI…LRQG. The tract at residues 368 to 395 is disordered; sequence PDDDADIGTGTGADGSAERSSNRLGVSV.

The protein belongs to the peptidase S1C family.

It localises to the periplasm. It carries out the reaction Acts on substrates that are at least partially unfolded. The cleavage site P1 residue is normally between a pair of hydrophobic residues, such as Val-|-Val.. Its function is as follows. Might be efficient in the degradation of transiently denatured and unfolded proteins which accumulate in the periplasm following stress conditions. The protein is Probable periplasmic serine endoprotease DegP-like of Pseudomonas putida (strain W619).